The following is a 293-amino-acid chain: Protease HtpX homolog (293 aa).

2 consecutive transmembrane segments (helical) span residues 4–24 (IFLF…VLSL) and 39–59 (PMLL…SLLI). A Zn(2+)-binding site is contributed by H144. E145 is an active-site residue. Zn(2+) is bound at residue H148. Transmembrane regions (helical) follow at residues 159–179 (LVQG…GYFV) and 200–220 (ITVL…VAWF). Zn(2+) is bound at residue E225.

The protein belongs to the peptidase M48B family. It depends on Zn(2+) as a cofactor.

It is found in the cell inner membrane. In Herminiimonas arsenicoxydans, this protein is Protease HtpX homolog.